A 392-amino-acid chain; its full sequence is Glutamine synthetase (392 aa).

One can recognise a GS beta-grasp domain in the interval 26 to 106 (VQVTYVWIDG…VMCEVLKYNR (81 aa)). Residues 113–392 (LRHTCKKIME…MASPRDAAVF (280 aa)) form the GS catalytic domain. Glutamate 134 contributes to the ATP binding site. Mn(2+)-binding residues include glutamate 134, glutamate 136, glutamate 196, and glutamate 203. Residue 203–208 (EFQVGP) coordinates ATP. 246-247 (NW) is an L-glutamate binding site. Residue histidine 253 coordinates Mn(2+). Residues 255-257 (NYS), arginine 319, and arginine 324 each bind ATP. Arginine 319 lines the L-glutamate pocket. Residue 336-338 (YFE) coordinates ADP. Mn(2+) is bound at residue glutamate 338. Arginine 340 contributes to the L-glutamate binding site.

Belongs to the glutamine synthetase family. The cofactor is Mg(2+). Mn(2+) serves as cofactor.

The protein localises to the cytoplasm. Its subcellular location is the cytosol. It is found in the microsome. It localises to the mitochondrion. The enzyme catalyses L-glutamate + NH4(+) + ATP = L-glutamine + ADP + phosphate + H(+). In terms of biological role, glutamine synthetase that catalyzes the ATP-dependent conversion of glutamate and ammonia to glutamine. In Xenopus laevis (African clawed frog), this protein is Glutamine synthetase.